The sequence spans 138 residues: Large ribosomal subunit protein uL16 (138 aa).

Over residues 1–18 (MALMPKRVKHRKSQRGRI) the composition is skewed to basic residues. Residues 1-21 (MALMPKRVKHRKSQRGRIKGN) are disordered.

Belongs to the universal ribosomal protein uL16 family. As to quaternary structure, part of the 50S ribosomal subunit.

Functionally, binds 23S rRNA and is also seen to make contacts with the A and possibly P site tRNAs. The sequence is that of Large ribosomal subunit protein uL16 from Rhodopirellula baltica (strain DSM 10527 / NCIMB 13988 / SH1).